Consider the following 394-residue polypeptide: S-adenosylmethionine synthase 1 (394 aa).

Residue Glu11 coordinates Mg(2+). His17 contributes to the ATP binding site. Position 45 (Glu45) interacts with K(+). Residues Glu58 and Gln101 each coordinate L-methionine. ATP is bound by residues 169-171, 237-240, Asp248, 254-255, Ala271, Lys275, and Lys279; these read DGK, SGRF, and RK. Asp248 contributes to the L-methionine binding site. Lys279 is a binding site for L-methionine.

The protein belongs to the AdoMet synthase family. In terms of assembly, homotetramer. It depends on Mn(2+) as a cofactor. Mg(2+) serves as cofactor. Requires Co(2+) as cofactor. The cofactor is K(+).

The protein resides in the cytoplasm. It carries out the reaction L-methionine + ATP + H2O = S-adenosyl-L-methionine + phosphate + diphosphate. The protein operates within amino-acid biosynthesis; S-adenosyl-L-methionine biosynthesis; S-adenosyl-L-methionine from L-methionine: step 1/1. Catalyzes the formation of S-adenosylmethionine from methionine and ATP. The reaction comprises two steps that are both catalyzed by the same enzyme: formation of S-adenosylmethionine (AdoMet) and triphosphate, and subsequent hydrolysis of the triphosphate. The polypeptide is S-adenosylmethionine synthase 1 (SAM1) (Hordeum vulgare (Barley)).